Here is an 838-residue protein sequence, read N- to C-terminus: Probable inorganic carbon transporter subunit DabA (838 aa).

Residues cysteine 353, aspartate 355, histidine 537, and cysteine 552 each contribute to the Zn(2+) site.

Belongs to the inorganic carbon transporter (TC 9.A.2) DabA family. As to quaternary structure, forms a complex with DabB. It depends on Zn(2+) as a cofactor.

The protein localises to the cell membrane. In terms of biological role, part of an energy-coupled inorganic carbon pump. This chain is Probable inorganic carbon transporter subunit DabA, found in Roseiflexus sp. (strain RS-1).